The chain runs to 193 residues: Rho-related GTP-binding protein RhoA-B (193 aa).

GTP-binding positions include 12–19, 30–37, 59–63, 117–120, and 160–162; these read GDGACGKT, FPEVYVPT, DTAGQ, NKKD, and SAK. A glycan ((Microbial infection) O-linked (GlcNAc) tyrosine; by Yersinia Afp18) is linked at Tyr34. Cys190 is subject to Cysteine methyl ester. A lipid anchor (S-geranylgeranyl cysteine) is attached at Cys190. The propeptide at 191 to 193 is removed in mature form; it reads CLL.

It belongs to the small GTPase superfamily. Rho family. In terms of processing, (Microbial infection) Glycosylated at Tyr-34 by Yersinia ruckeri toxin Afp18. Mono-O-GlcNAcylation by Afp18 inhibits RhoA activation by guanine nucleotide exchange factors and blocks RhoA signaling.

Its subcellular location is the cell membrane. Regulates a signal transduction pathway linking plasma membrane receptors to the assembly of focal adhesions and actin stress fibers. This Danio rerio (Zebrafish) protein is Rho-related GTP-binding protein RhoA-B.